The following is a 578-amino-acid chain: SCARECROW-LIKE protein 7 (578 aa).

The segment covering 18-29 (VIQQQQQQQQQQ) has biased composition (low complexity). Disordered regions lie at residues 18–84 (VIQQ…LAYG) and 146–173 (PPPP…APRP). Residues 49–61 (PHHHQQKHHHHHQ) are compositionally biased toward basic residues. A compositionally biased stretch (low complexity) spans 62–74 (QMPAMPQAPPSSH). Over residues 146-156 (PPPPVPSPPPT) the composition is skewed to pro residues. Low complexity predominate over residues 157 to 173 (HAAATATATAATAAPRP). Residues 198 to 578 (SADASCSAPI…RPLLTVSAWR (381 aa)) enclose the GRAS domain. Positions 205–264 (APILQSLLSCSRAAATDPGLAAAELASVRAAATDAGDPSERLAFYFADALSRRLACGTGA) are leucine repeat I (LRI). Positions 283 to 349 (YKTLNDACPY…GKPTRIRITG (67 aa)) are VHIID. Positions 314 to 318 (IHIVD) match the VHIID motif. The segment at 365-397 (ATNTRLRDFAKLLGVDFEFVPLLRPVHELNKSD) is leucine repeat II (LRII). Positions 406-497 (VAVNFMLQLY…RWMFGERIQR (92 aa)) are PFYRE. Positions 414 to 418 (LYHLL) match the LXXLL motif motif. The SAW stretch occupies residues 500 to 578 (GPEEGADRTE…RPLLTVSAWR (79 aa)).

This sequence belongs to the GRAS family. Homodimer.

The protein localises to the nucleus. Its function is as follows. Probable transcription factor involved in plant development. Involved in environmental abiotic stress resistance. May increase the expression of stress-responsive genes. Binds DNA in vitro. This is SCARECROW-LIKE protein 7 from Oryza sativa subsp. japonica (Rice).